Here is a 393-residue protein sequence, read N- to C-terminus: Digeranylgeranylglycerophospholipid reductase 2 (393 aa).

The FAD site is built by Asp-33, Cys-44, Ala-45, Gly-47, Arg-100, Ala-124, Asp-280, Gly-292, and Ile-293.

Belongs to the geranylgeranyl reductase family. DGGGPL reductase subfamily. The cofactor is FAD.

It catalyses the reaction a 2,3-bis-O-phytanyl-sn-glycerol 1-phospholipid + 8 A = a 2,3-bis-O-(geranylgeranyl)-sn-glycerol 1-phospholipid + 8 AH2. It carries out the reaction 2,3-bis-O-(phytanyl)-sn-glycerol 1-phosphate + 8 A = 2,3-bis-O-(geranylgeranyl)-sn-glycerol 1-phosphate + 8 AH2. The catalysed reaction is CDP-2,3-bis-O-(geranylgeranyl)-sn-glycerol + 8 AH2 = CDP-2,3-bis-O-(phytanyl)-sn-glycerol + 8 A. The enzyme catalyses archaetidylserine + 8 AH2 = 2,3-bis-O-phytanyl-sn-glycero-3-phospho-L-serine + 8 A. It functions in the pathway membrane lipid metabolism; glycerophospholipid metabolism. Functionally, is involved in the reduction of 2,3-digeranylgeranylglycerophospholipids (unsaturated archaeols) into 2,3-diphytanylglycerophospholipids (saturated archaeols) in the biosynthesis of archaeal membrane lipids. Catalyzes the formation of archaetidic acid (2,3-di-O-phytanyl-sn-glyceryl phosphate) from 2,3-di-O-geranylgeranylglyceryl phosphate (DGGGP) via the hydrogenation of each double bond of the isoprenoid chains. Is also probably able to reduce double bonds of geranyl groups in CDP-2,3-bis-O-(geranylgeranyl)-sn-glycerol and archaetidylserine, thus acting at various stages in the biosynthesis of archaeal membrane lipids. This is Digeranylgeranylglycerophospholipid reductase 2 from Methanosphaera stadtmanae (strain ATCC 43021 / DSM 3091 / JCM 11832 / MCB-3).